The following is a 233-amino-acid chain: Large ribosomal subunit protein uL1 (233 aa).

It belongs to the universal ribosomal protein uL1 family. Part of the 50S ribosomal subunit.

Functionally, binds directly to 23S rRNA. The L1 stalk is quite mobile in the ribosome, and is involved in E site tRNA release. Its function is as follows. Protein L1 is also a translational repressor protein, it controls the translation of the L11 operon by binding to its mRNA. The chain is Large ribosomal subunit protein uL1 from Shewanella pealeana (strain ATCC 700345 / ANG-SQ1).